Consider the following 291-residue polypeptide: AA14 family lytic polysaccharide monooxygenase (291 aa).

Positions Met1–Ala17 are cleaved as a signal peptide. N-linked (GlcNAc...) asparagine glycosylation occurs at Asn141. Cystine bridges form between Cys192–Cys197, Cys199–Cys220, and Cys240–Cys247.

This sequence belongs to the polysaccharide monooxygenase AA14 family. It depends on Cu(2+) as a cofactor.

It localises to the secreted. Lytic polysaccharide monooxygenase (LPMO) that is active against heteroxylan, xyloglucan and cellulose in beta-cellulose and released native oligosaccharides and corresponding C1- and/or C4-oxidized products. May act mainly on heteroxylan with numerous arabinosyl substituents between cellulose fibers rather than on recalcitrant xylan tightly associated with cellulose. Catalysis by LPMOs requires the reduction of the active-site copper from Cu(II) to Cu(I) by a reducing agent and H(2)O(2) or O(2) as a cosubstrate. Shows a branched chain preference, and has synergistic effects with the Penicillium parvum debranching enzyme ABF62C in an enzyme- and ascorbic acid-dependent manner. Also has synergistic effects with the Penicillium parvum GH10 endoxylanase XYN1, and the degree of synergy was greater with step-by-step addition than with simultaneous addition. This Sordaria brevicollis protein is AA14 family lytic polysaccharide monooxygenase.